Consider the following 122-residue polypeptide: Phospholipase A2 crotoxin basic chain (122 aa).

7 disulfide bridges follow: Cys26–Cys115, Cys28–Cys44, Cys43–Cys95, Cys49–Cys122, Cys50–Cys88, Cys57–Cys81, and Cys75–Cys86. Ca(2+) is bound by residues Tyr27, Gly29, and Gly31. The active site involves His47. Position 48 (Asp48) interacts with Ca(2+). The active site involves Asp89.

As to quaternary structure, heterodimer of one acidic (CA also named crotapotin) and one basic (CB) subunits; non-covalently linked. Requires Ca(2+) as cofactor. Expressed by the venom gland.

Its subcellular location is the secreted. The catalysed reaction is a 1,2-diacyl-sn-glycero-3-phosphocholine + H2O = a 1-acyl-sn-glycero-3-phosphocholine + a fatty acid + H(+). In terms of biological role, heterodimer CA-CB: Crotoxin is a potent presynaptic neurotoxin that possesses phospholipase A2 (PLA2) activity and exerts a lethal action by blocking neuromuscular transmission. It consists of a non-covalent association of a basic and weakly toxic PLA2 subunit (CB), with a small acidic, non-enzymatic and non-toxic subunit (CA also named crotapotin). The complex acts by binding to a specific 48-kDa protein (R48) receptor located on presynaptic membranes, forming a transient ternary complex CA-CB-R48, followed by dissociation of the CA-CB complex and release of the CA subunit. At equilibrium, only the CB subunits remain associated with the specific crotoxin receptor. In addition to neurotoxicity, crotoxin has been found to exert nephrotoxicity, and cardiovascular toxicity. Moreover, anti-inflammatory, immunomodulatory, anti-tumor and analgesic effects of crotoxin have also been reported. Monomer CB: The basic subunit of crotoxin is a snake venom phospholipase A2 (PLA2) that exhibits weak neurotoxicity and strong anticoagulant effects by binding to factor Xa (F10) and inhibiting the prothrombinase activity. In addition, it exerts myotoxicity, nephrotoxicity, and cardiovascular toxicity as well as anti-inflammatory, immunomodulatory, anti-tumor and analgesic effects. Also shows a strong antimicrobial activity against X.axonopodis passiforae (Gram-negative) which is completely dependent on the enzymatic activity. PLA2 catalyzes the calcium-dependent hydrolysis of the 2- acyl groups in 3-sn-phosphoglycerides. The protein is Phospholipase A2 crotoxin basic chain of Crotalus durissus collilineatus (Brazilian rattlesnake).